Reading from the N-terminus, the 482-residue chain is uncharacterized protein (482 aa).

The 69-residue stretch at 12 to 80 (LPKYRQIVHF…MGKGTVVINN (69 aa)) folds into the HTH gntR-type domain. Residues 40–59 (QRTLAKDFQVNRSTVITALE) constitute a DNA-binding region (H-T-H motif). Lys-325 carries the N6-(pyridoxal phosphate)lysine modification.

The protein in the C-terminal section; belongs to the class-I pyridoxal-phosphate-dependent aminotransferase family. The cofactor is pyridoxal 5'-phosphate.

This is an uncharacterized protein from Bacillus subtilis (strain 168).